A 156-amino-acid chain; its full sequence is Transcriptional repressor NrdR (156 aa).

Residues 3 to 34 (CPKCNSTHSRVVDSRHADEANAIRRRRECENC) fold into a zinc finger. Residues 49–139 (LIVVKKDGTR…VYKEFKDVDQ (91 aa)) form the ATP-cone domain.

It belongs to the NrdR family. Requires Zn(2+) as cofactor.

Its function is as follows. Negatively regulates transcription of bacterial ribonucleotide reductase nrd genes and operons by binding to NrdR-boxes. This chain is Transcriptional repressor NrdR, found in Staphylococcus epidermidis (strain ATCC 35984 / DSM 28319 / BCRC 17069 / CCUG 31568 / BM 3577 / RP62A).